We begin with the raw amino-acid sequence, 239 residues long: Ribosomal RNA small subunit methyltransferase G (239 aa).

S-adenosyl-L-methionine-binding positions include glycine 78, phenylalanine 83, 129–130, and arginine 148; that span reads AE.

It belongs to the methyltransferase superfamily. RNA methyltransferase RsmG family.

The protein localises to the cytoplasm. Specifically methylates the N7 position of a guanine in 16S rRNA. The chain is Ribosomal RNA small subunit methyltransferase G from Clostridium perfringens (strain 13 / Type A).